Reading from the N-terminus, the 227-residue chain is tRNA (guanine-N(7)-)-methyltransferase (227 aa).

S-adenosyl-L-methionine contacts are provided by glutamate 58, glutamate 83, aspartate 110, and aspartate 132. Aspartate 132 is an active-site residue. Substrate contacts are provided by residues lysine 136, aspartate 168, and 205–208 (TRFE).

The protein belongs to the class I-like SAM-binding methyltransferase superfamily. TrmB family.

The catalysed reaction is guanosine(46) in tRNA + S-adenosyl-L-methionine = N(7)-methylguanosine(46) in tRNA + S-adenosyl-L-homocysteine. It functions in the pathway tRNA modification; N(7)-methylguanine-tRNA biosynthesis. In terms of biological role, catalyzes the formation of N(7)-methylguanine at position 46 (m7G46) in tRNA. In Acidithiobacillus ferrooxidans (strain ATCC 23270 / DSM 14882 / CIP 104768 / NCIMB 8455) (Ferrobacillus ferrooxidans (strain ATCC 23270)), this protein is tRNA (guanine-N(7)-)-methyltransferase.